We begin with the raw amino-acid sequence, 461 residues long: Fumarate hydratase class II (461 aa).

Substrate is bound by residues 97-99 (SGT), 127-130 (HPND), 137-139 (SSN), and T185. H186 functions as the Proton donor/acceptor in the catalytic mechanism. The active site involves S316. Residues S317 and 322 to 324 (KVN) contribute to the substrate site.

It belongs to the class-II fumarase/aspartase family. Fumarase subfamily. As to quaternary structure, homotetramer.

It is found in the cytoplasm. It carries out the reaction (S)-malate = fumarate + H2O. Its pathway is carbohydrate metabolism; tricarboxylic acid cycle; (S)-malate from fumarate: step 1/1. Involved in the TCA cycle. Catalyzes the stereospecific interconversion of fumarate to L-malate. The protein is Fumarate hydratase class II of Staphylococcus aureus (strain MSSA476).